The sequence spans 212 residues: Kynurenine formamidase (212 aa).

Tryptophan 18 contacts substrate. Zn(2+)-binding residues include histidine 48, histidine 52, and aspartate 54. The Proton donor/acceptor role is filled by histidine 58. Histidine 160 and glutamate 172 together coordinate Zn(2+).

It belongs to the Cyclase 1 superfamily. KynB family. Homodimer. Zn(2+) is required as a cofactor.

The enzyme catalyses N-formyl-L-kynurenine + H2O = L-kynurenine + formate + H(+). Its pathway is amino-acid degradation; L-tryptophan degradation via kynurenine pathway; L-kynurenine from L-tryptophan: step 2/2. Catalyzes the hydrolysis of N-formyl-L-kynurenine to L-kynurenine, the second step in the kynurenine pathway of tryptophan degradation. This Paraburkholderia xenovorans (strain LB400) protein is Kynurenine formamidase.